Consider the following 338-residue polypeptide: Thiamine thiazole synthase (338 aa).

A disordered region spans residues 1 to 43; the sequence is MSPVATESMYKPTTINQTAHQQAMDPLKSKQQSNATVNKPAFK. Positions 11-21 are enriched in polar residues; sequence KPTTINQTAHQ. Substrate is bound by residues Ala91, 112–113, Gly120, and Cys185; that span reads ES. Cys221 bears the 2,3-didehydroalanine (Cys) mark. Substrate is bound by residues Asp223, His238, Met290, and 300–302; that span reads RMG.

Belongs to the THI4 family. In terms of assembly, homooctamer. It depends on Fe cation as a cofactor. In terms of processing, during the catalytic reaction, a sulfide is transferred from Cys-221 to a reaction intermediate, generating a dehydroalanine residue. As to expression, highly expressed in haustoria, and only in low amounts in intercellular hyphae. Found in the basal hyphae of the uredia, but not in the pedicels and only at very low levels in uredospores.

It localises to the cytoplasm. The protein localises to the nucleus. The enzyme catalyses [ADP-thiazole synthase]-L-cysteine + glycine + NAD(+) = [ADP-thiazole synthase]-dehydroalanine + ADP-5-ethyl-4-methylthiazole-2-carboxylate + nicotinamide + 3 H2O + 2 H(+). Its function is as follows. Involved in biosynthesis of the thiamine precursor thiazole. Catalyzes the conversion of NAD and glycine to adenosine diphosphate 5-(2-hydroxyethyl)-4-methylthiazole-2-carboxylic acid (ADT), an adenylated thiazole intermediate. The reaction includes an iron-dependent sulfide transfer from a conserved cysteine residue of the protein to a thiazole intermediate. The enzyme can only undergo a single turnover, which suggests it is a suicide enzyme. May have additional roles in adaptation to various stress conditions and in DNA damage tolerance. The sequence is that of Thiamine thiazole synthase (THI2) from Uromyces fabae (Rust fungus).